The following is a 612-amino-acid chain: Rhamnogalacturonan exolyase YesX (612 aa).

Asn-119 is a binding site for substrate. Residues Asp-120, Asp-125, Asp-127, Asp-129, Glu-131, and Glu-133 each coordinate Ca(2+). Asp-139, Glu-154, and Arg-174 together coordinate substrate. Ca(2+) is bound by residues Asp-189, Asp-191, Asp-193, Lys-195, and Glu-197. Positions 205 and 222 each coordinate substrate. Residues His-330, Asp-336, Asp-338, Asp-340, Lys-342, Glu-344, Asp-353, His-354, His-366, Asp-368, Asp-374, Asp-376, Arg-379, Gly-381, Glu-383, and Glu-389 each coordinate Ca(2+). A substrate-binding site is contributed by Arg-419. Positions 472, 474, 476, and 478 each coordinate Ca(2+). 516–518 (NGT) provides a ligand contact to substrate. Residues Asn-527, Phe-529, Asp-531, Arg-533, Glu-535, Asn-576, and Ala-578 each coordinate Ca(2+). Tyr-579 is a binding site for substrate. Asn-580 serves as a coordination point for Ca(2+).

It belongs to the polysaccharide lyase 11 family. In terms of assembly, monomer. Mn(2+) is required as a cofactor. Zn(2+) serves as cofactor. Requires Co(2+) as cofactor. The cofactor is Ca(2+).

The protein localises to the secreted. The catalysed reaction is Exotype eliminative cleavage of alpha-L-rhamnopyranosyl-(1-&gt;4)-alpha-D-galactopyranosyluronic acid bonds of rhamnogalacturonan I oligosaccharides containing alpha-L-rhamnopyranose at the reducing end and 4-deoxy-4,5-unsaturated D-galactopyranosyluronic acid at the non-reducing end. The products are the disaccharide 2-O-(4-deoxy-beta-L-threo-hex-4-enopyranuronosyl)-alpha-L-rhamnopyranose and the shortened rhamnogalacturonan oligosaccharide containing one 4-deoxy-4,5-unsaturated D-galactopyranosyluronic acid at the non-reducing end.. Pectinolytic enzyme that degrades type I rhamnogalacturonan from plant cell walls and releases disaccharide products. Degrades rhamnogalacturonan, polygalacturonic acid and pectic acid. Has very low activity on pectin. This is Rhamnogalacturonan exolyase YesX (yesX) from Bacillus subtilis (strain 168).